The primary structure comprises 265 residues: Putative 2-amino-3,7-dideoxy-D-threo-hept-6-ulosonate synthase 2 (265 aa).

Residue aspartate 27 is the Proton acceptor of the active site. 1-deoxy-D-threo-hexo-2,5-diulose 6-phosphate contacts are provided by residues 27–31 and 147–149; these read DHGVS and YPR. Tyrosine 147 acts as the Proton donor in catalysis. Lysine 177 acts as the Schiff-base intermediate with substrate in catalysis. Residues 202–203 and 230–231 contribute to the 1-deoxy-D-threo-hexo-2,5-diulose 6-phosphate site; these read GG and GR.

It belongs to the DeoC/FbaB aldolase family. ADHS subfamily. In terms of assembly, homodecamer.

The catalysed reaction is 1-deoxy-D-threo-hexo-2,5-diulose 6-phosphate + L-aspartate 4-semialdehyde = 2,3-dioxopropyl phosphate + 2-amino-2,3,7-trideoxy-D-lyxo-hept-6-ulosonate. Catalyzes a transaldol reaction between 6-deoxy-5-ketofructose 1-phosphate (DKFP) and L-aspartate semialdehyde (ASA) with an elimination of hydroxypyruvaldehyde phosphate to yield 2-amino-3,7-dideoxy-D-threo-hept-6-ulosonate (ADH). Plays a key role in an alternative pathway of the biosynthesis of 3-dehydroquinate (DHQ), which is involved in the canonical pathway for the biosynthesis of aromatic amino acids. In Archaeoglobus fulgidus (strain ATCC 49558 / DSM 4304 / JCM 9628 / NBRC 100126 / VC-16), this protein is Putative 2-amino-3,7-dideoxy-D-threo-hept-6-ulosonate synthase 2.